Consider the following 309-residue polypeptide: tRNA dimethylallyltransferase (309 aa).

9-16 contributes to the ATP binding site; sequence GPTAVGKT. A substrate-binding site is contributed by 11 to 16; sequence TAVGKT. The segment at 34–37 is interaction with substrate tRNA; the sequence is DSMQ.

This sequence belongs to the IPP transferase family. Monomer. Mg(2+) serves as cofactor.

The catalysed reaction is adenosine(37) in tRNA + dimethylallyl diphosphate = N(6)-dimethylallyladenosine(37) in tRNA + diphosphate. Its function is as follows. Catalyzes the transfer of a dimethylallyl group onto the adenine at position 37 in tRNAs that read codons beginning with uridine, leading to the formation of N6-(dimethylallyl)adenosine (i(6)A). This Clostridium acetobutylicum (strain ATCC 824 / DSM 792 / JCM 1419 / IAM 19013 / LMG 5710 / NBRC 13948 / NRRL B-527 / VKM B-1787 / 2291 / W) protein is tRNA dimethylallyltransferase.